Reading from the N-terminus, the 813-residue chain is Microtubule-associated protein 6 (813 aa).

Residues Cys-5, Cys-10, and Cys-11 are each lipidated (S-palmitoyl cysteine). 3 disordered regions span residues 36-283 (ATEH…AAAD), 314-651 (VKPI…KDES), and 756-813 (PLKD…ESSP). Over residues 41–50 (GAPPQPPPPQ) the composition is skewed to pro residues. Low complexity predominate over residues 51–62 (QQAQPALAPPSA). Residues 100–112 (GRSGPGPGLGSGS) are compositionally biased toward gly residues. Position 102 is a phosphoserine (Ser-102). The tract at residues 118-141 (DSVMRQDYRAWKVQRPEPSCRPRS) is mn 1. The segment covering 121-141 (MRQDYRAWKVQRPEPSCRPRS) has biased composition (basic and acidic residues). The tract at residues 126 to 140 (RAWKVQRPEPSCRPR) is calmodulin-binding. Tyr-143 bears the Phosphotyrosine mark. Residues 149-173 (PFERETQYQKDFRAWPLPRRGDHPW) are compositionally biased toward basic and acidic residues. The interval 153–176 (ETQYQKDFRAWPLPRRGDHPWIPK) is mn 2. Positions 162 to 176 (AWPLPRRGDHPWIPK) are calmodulin-binding. At Ser-187 the chain carries Phosphoserine. Calmodulin-binding regions lie at residues 189–203 (PILG…SQER), 306–320 (RAWT…IKAK), 357–371 (RRRI…FKEP), and 384–398 (PKKT…RKAK). Residues 298–321 (SSSYRNEFRAWTDIKPVKPIKAKP) are mn 3. The span at 367-376 (PFKEPPKVEK) shows a compositional bias: basic and acidic residues. The span at 383-398 (KPKKTSASHKPTRKAK) shows a compositional bias: basic residues. Positions 420-439 (KPDDKEQSKEMNNKLAEAKE) are enriched in basic and acidic residues. Polar residues predominate over residues 443 to 454 (QPVSDSSKTQGP). The span at 637-651 (KDQDPMVPEHPKDES) shows a compositional bias: basic and acidic residues. Ser-812 is modified (phosphoserine).

The protein belongs to the STOP family. In terms of assembly, interacts with calmodulin (via C-terminus); the interaction is dependent on Ca(2+). Interacts (via C-terminus) with TMEM106B (via N-terminus). Interacts with ZDHHC17 (via ANK repeats). Interacts with ZDHHC13 (via ANK repeats). Post-translationally, palmitoylated. Probably depalmitoylated by ABHD17A, ABHD17B and ABHD17C. During neuronal polarization, palmitoylation and depalmitoylation cycles regulate MAP6 shuttling between secretory vesicles and microtubules, and its polarized distribution in the axon. Expressed in brain (at protein level). Expressed in spinal cord. Isoform 2 expression is up-regulated in the prefrontal cortex (Brodmann's area 46) of patients with schizophrenia (postmortem brain study).

Its subcellular location is the cytoplasm. It is found in the cytoskeleton. The protein localises to the golgi apparatus. It localises to the cell projection. The protein resides in the axon. Its subcellular location is the dendrite. It is found in the cytoplasmic vesicle. The protein localises to the secretory vesicle membrane. In terms of biological role, involved in microtubule stabilization in many cell types, including neuronal cells. Specifically has microtubule cold stabilizing activity. Involved in dendrite morphogenesis and maintenance by regulating lysosomal trafficking via its interaction with TMEM106B. Regulates KIF5A-mediated axonal cargo transport. Regulates axonal growth during neuron polarization. The polypeptide is Microtubule-associated protein 6 (MAP6) (Homo sapiens (Human)).